The chain runs to 296 residues: Pantothenate synthetase (296 aa).

37–44 is an ATP binding site; it reads MGALHTGH. Residue His44 is the Proton donor of the active site. (R)-pantoate is bound at residue Gln68. Gln68 is a beta-alanine binding site. Position 160-163 (160-163) interacts with ATP; the sequence is GQKD. Gln166 is a (R)-pantoate binding site. Residues Val189 and 197-200 contribute to the ATP site; that span reads TSSR.

Belongs to the pantothenate synthetase family. Homodimer.

The protein resides in the cytoplasm. It carries out the reaction (R)-pantoate + beta-alanine + ATP = (R)-pantothenate + AMP + diphosphate + H(+). The protein operates within cofactor biosynthesis; (R)-pantothenate biosynthesis; (R)-pantothenate from (R)-pantoate and beta-alanine: step 1/1. In terms of biological role, catalyzes the condensation of pantoate with beta-alanine in an ATP-dependent reaction via a pantoyl-adenylate intermediate. This Thermobifida fusca (strain YX) protein is Pantothenate synthetase.